Reading from the N-terminus, the 306-residue chain is Probable cobalamin biosynthesis protein CobD (306 aa).

Helical transmembrane passes span 54–74 (LFGF…AFEI), 88–108 (ISLY…IEFS), 155–175 (ITDS…PGAF), 207–227 (ILNF…APFY), and 286–306 (SLKA…ILFM).

This sequence belongs to the CobD/CbiB family.

Its subcellular location is the cell membrane. The protein operates within cofactor biosynthesis; adenosylcobalamin biosynthesis. Its function is as follows. Converts cobyric acid to cobinamide by the addition of aminopropanol on the F carboxylic group. The polypeptide is Probable cobalamin biosynthesis protein CobD (Methanococcus maripaludis (strain DSM 14266 / JCM 13030 / NBRC 101832 / S2 / LL)).